Reading from the N-terminus, the 275-residue chain is 2,3,4,5-tetrahydropyridine-2,6-dicarboxylate N-succinyltransferase (275 aa).

This sequence belongs to the transferase hexapeptide repeat family.

It localises to the cytoplasm. It catalyses the reaction (S)-2,3,4,5-tetrahydrodipicolinate + succinyl-CoA + H2O = (S)-2-succinylamino-6-oxoheptanedioate + CoA. The protein operates within amino-acid biosynthesis; L-lysine biosynthesis via DAP pathway; LL-2,6-diaminopimelate from (S)-tetrahydrodipicolinate (succinylase route): step 1/3. In Burkholderia ambifaria (strain MC40-6), this protein is 2,3,4,5-tetrahydropyridine-2,6-dicarboxylate N-succinyltransferase.